Here is a 124-residue protein sequence, read N- to C-terminus: Galanin peptides (124 aa).

The first 19 residues, 1–19 (MARGSVILLGWLLLVVTLS), serve as a signal peptide directing secretion. Positions 20 to 30 (ATLGLGMPAKE) are excised as a propeptide. Thr-61 bears the Threonine amide mark. 2 positions are modified to phosphoserine: Ser-117 and Ser-118.

It belongs to the galanin family. As to expression, expressed in retinal progenitor cells and retinal ganglion cells (at protein level).

The protein localises to the secreted. Its function is as follows. Endocrine hormone of the central and peripheral nervous systems that binds and activates the G protein-coupled receptors GALR1, GALR2, and GALR3. This small neuropeptide may regulate diverse physiologic functions including contraction of smooth muscle of the gastrointestinal and genitourinary tract, growth hormone and insulin release and adrenal secretion. In Mus musculus (Mouse), this protein is Galanin peptides (Gal).